The sequence spans 450 residues: tRNA modification GTPase MnmE (450 aa).

The (6S)-5-formyl-5,6,7,8-tetrahydrofolate site is built by arginine 23, glutamate 79, and lysine 118. Positions 214–374 constitute a TrmE-type G domain; that stretch reads GITLILVGKP…LKEHILNKVG (161 aa). Asparagine 224 is a K(+) binding site. Residues 224–229, 243–249, and 268–271 each bind GTP; these read NAGKSS, TSIAGTT, and DTAG. Position 228 (serine 228) interacts with Mg(2+). Residues threonine 243, isoleucine 245, and threonine 248 each contribute to the K(+) site. Threonine 249 is a Mg(2+) binding site. Lysine 450 provides a ligand contact to (6S)-5-formyl-5,6,7,8-tetrahydrofolate.

Belongs to the TRAFAC class TrmE-Era-EngA-EngB-Septin-like GTPase superfamily. TrmE GTPase family. As to quaternary structure, homodimer. Heterotetramer of two MnmE and two MnmG subunits. It depends on K(+) as a cofactor.

The protein localises to the cytoplasm. In terms of biological role, exhibits a very high intrinsic GTPase hydrolysis rate. Involved in the addition of a carboxymethylaminomethyl (cmnm) group at the wobble position (U34) of certain tRNAs, forming tRNA-cmnm(5)s(2)U34. This chain is tRNA modification GTPase MnmE, found in Francisella tularensis subsp. holarctica (strain FTNF002-00 / FTA).